A 339-amino-acid polypeptide reads, in one-letter code: Ferredoxin--NADP reductase (339 aa).

FAD-binding residues include E35, Q43, Y48, V88, F122, D287, and S327.

The protein belongs to the ferredoxin--NADP reductase type 2 family. In terms of assembly, homodimer. It depends on FAD as a cofactor.

The enzyme catalyses 2 reduced [2Fe-2S]-[ferredoxin] + NADP(+) + H(+) = 2 oxidized [2Fe-2S]-[ferredoxin] + NADPH. This Leuconostoc citreum (strain KM20) protein is Ferredoxin--NADP reductase.